Here is a 110-residue protein sequence, read N- to C-terminus: Chelonianin (110 aa).

The residue at position 1 (Gln-1) is a Pyrrolidone carboxylic acid. The 51-residue stretch at 8-58 (CRLPPEQGPCKGRIPRYFYNPASRMCESFIYGGCKGNKNNFKTKAECVRAC) folds into the BPTI/Kunitz inhibitor domain. Cystine bridges form between Cys-8-Cys-58, Cys-17-Cys-41, Cys-33-Cys-54, Cys-67-Cys-92, Cys-76-Cys-97, Cys-80-Cys-93, and Cys-86-Cys-101. Residues 60 to 105 (PPERPGVCPKTSGPGICLHGCDSDSDCKEGQKCCFDGCGYICLTVA) form the WAP domain.

In terms of biological role, the first domain inhibits trypsin; the second one inhibitis subtilisin. This chain is Chelonianin, found in Caretta caretta (Loggerhead sea turtle).